Consider the following 359-residue polypeptide: Peptide chain release factor 1 (359 aa).

An N5-methylglutamine modification is found at glutamine 234. A disordered region spans residues 283-305 (SQKDAARAADRRAQVGSGDRSER).

Belongs to the prokaryotic/mitochondrial release factor family. Post-translationally, methylated by PrmC. Methylation increases the termination efficiency of RF1.

The protein resides in the cytoplasm. Its function is as follows. Peptide chain release factor 1 directs the termination of translation in response to the peptide chain termination codons UAG and UAA. The protein is Peptide chain release factor 1 of Methylobacterium sp. (strain 4-46).